Reading from the N-terminus, the 382-residue chain is 8-amino-7-oxononanoate synthase (382 aa).

2 residues coordinate substrate: Arg21 and His131. Ser178, His206, and Thr232 together coordinate pyridoxal 5'-phosphate. Position 235 is an N6-(pyridoxal phosphate)lysine (Lys235). Residue Thr349 participates in substrate binding.

It belongs to the class-II pyridoxal-phosphate-dependent aminotransferase family. BioF subfamily. As to quaternary structure, homodimer. It depends on pyridoxal 5'-phosphate as a cofactor.

It catalyses the reaction 6-carboxyhexanoyl-[ACP] + L-alanine + H(+) = (8S)-8-amino-7-oxononanoate + holo-[ACP] + CO2. It functions in the pathway cofactor biosynthesis; biotin biosynthesis. Functionally, catalyzes the decarboxylative condensation of pimeloyl-[acyl-carrier protein] and L-alanine to produce 8-amino-7-oxononanoate (AON), [acyl-carrier protein], and carbon dioxide. The sequence is that of 8-amino-7-oxononanoate synthase from Serratia marcescens.